Consider the following 75-residue polypeptide: AFSGILAEADIAAALKACEAADSFNYKAFFAKKAFFVIDQDKSGFIEEDELKLFLQVFSAGARALTDAETKAFLK.

Position 1 is an N-acetylalanine (Ala1). The 36-residue stretch at 26 to 61 folds into the EF-hand domain; it reads YKAFFAKKAFFVIDQDKSGFIEEDELKLFLQVFSAG. The Ca(2+) site is built by Asp39, Asp41, Ser43, Phe45, Glu47, and Glu50.

It belongs to the parvalbumin family.

Functionally, in muscle, parvalbumin is thought to be involved in relaxation after contraction. It binds two calcium ions. The sequence is that of Parvalbumin beta 3 from Merluccius gayi (South Pacific hake).